Here is a 295-residue protein sequence, read N- to C-terminus: UDP-3-O-acyl-N-acetylglucosamine deacetylase (295 aa).

The Zn(2+) site is built by histidine 77, histidine 233, and aspartate 237. Residue histidine 260 is the Proton donor of the active site.

The protein belongs to the LpxC family. The cofactor is Zn(2+).

It carries out the reaction a UDP-3-O-[(3R)-3-hydroxyacyl]-N-acetyl-alpha-D-glucosamine + H2O = a UDP-3-O-[(3R)-3-hydroxyacyl]-alpha-D-glucosamine + acetate. It participates in glycolipid biosynthesis; lipid IV(A) biosynthesis; lipid IV(A) from (3R)-3-hydroxytetradecanoyl-[acyl-carrier-protein] and UDP-N-acetyl-alpha-D-glucosamine: step 2/6. In terms of biological role, catalyzes the hydrolysis of UDP-3-O-myristoyl-N-acetylglucosamine to form UDP-3-O-myristoylglucosamine and acetate, the committed step in lipid A biosynthesis. The polypeptide is UDP-3-O-acyl-N-acetylglucosamine deacetylase (Solibacter usitatus (strain Ellin6076)).